A 79-amino-acid chain; its full sequence is Sec-independent protein translocase protein TatA (79 aa).

Residues M1–F21 form a helical membrane-spanning segment. Positions E48 to G79 are disordered. Basic and acidic residues predominate over residues K66–G79.

It belongs to the TatA/E family. As to quaternary structure, the Tat system comprises two distinct complexes: a TatABC complex, containing multiple copies of TatA, TatB and TatC subunits, and a separate TatA complex, containing only TatA subunits. Substrates initially bind to the TatABC complex, which probably triggers association of the separate TatA complex to form the active translocon.

The protein resides in the cell inner membrane. In terms of biological role, part of the twin-arginine translocation (Tat) system that transports large folded proteins containing a characteristic twin-arginine motif in their signal peptide across membranes. TatA could form the protein-conducting channel of the Tat system. This Helicobacter acinonychis (strain Sheeba) protein is Sec-independent protein translocase protein TatA.